Consider the following 360-residue polypeptide: Peptide chain release factor 1 (360 aa).

Glutamine 235 carries the post-translational modification N5-methylglutamine.

Belongs to the prokaryotic/mitochondrial release factor family. In terms of processing, methylated by PrmC. Methylation increases the termination efficiency of RF1.

Its subcellular location is the cytoplasm. In terms of biological role, peptide chain release factor 1 directs the termination of translation in response to the peptide chain termination codons UAG and UAA. The protein is Peptide chain release factor 1 of Bordetella parapertussis (strain 12822 / ATCC BAA-587 / NCTC 13253).